Consider the following 396-residue polypeptide: MAKAKFERTKPHVNIGTIGHVDHGKTTLTAAITKVLHDQYPDLNESRAFDQIDNAPEERQRGITINISHVEYQTEKRHYAHVDAPGHADYIKNMITGAAQMDGAILVVAATDGPMPQTREHVLLARQVGVPYILVALNKADMVDDEELIELVEMEVRELLAAQDFDEDAPVVKVSALKALEGDEKWVKSVQELMAAVDESIPDPVRETDKPFLMPVEDVFTITGRGTVVTGRVERGVINVNEEVEIVGIRPTVTKTTVTGVEMFRKLLDQGQAGDNVGLLVRGIKREDVERGQVVVKPGTTTPHTEFEGSVYILSKDEGGRHTPFFNNYRPQFYFRTTDVTGVVTLPEGTEMVMPGDNTDIAVKLIQPVAMDEGLRFAIREGGRTVGAGRVTKIIK.

Residues lysine 10 to valine 205 form the tr-type G domain. Residues glycine 19–threonine 26 form a G1 region. Glycine 19–threonine 26 serves as a coordination point for GTP. Mg(2+) is bound at residue threonine 26. The G2 stretch occupies residues glycine 62–asparagine 66. The segment at aspartate 83–glycine 86 is G3. GTP contacts are provided by residues aspartate 83 to histidine 87 and asparagine 138 to aspartate 141. Residues asparagine 138–aspartate 141 are G4. The segment at serine 175–leucine 177 is G5.

This sequence belongs to the TRAFAC class translation factor GTPase superfamily. Classic translation factor GTPase family. EF-Tu/EF-1A subfamily. As to quaternary structure, monomer.

The protein resides in the cytoplasm. It catalyses the reaction GTP + H2O = GDP + phosphate + H(+). Its function is as follows. GTP hydrolase that promotes the GTP-dependent binding of aminoacyl-tRNA to the A-site of ribosomes during protein biosynthesis. This chain is Elongation factor Tu, found in Mycolicibacterium gilvum (strain PYR-GCK) (Mycobacterium gilvum (strain PYR-GCK)).